The primary structure comprises 294 residues: Farnesyl diphosphate synthase (294 aa).

Isopentenyl diphosphate-binding residues include Lys45, Arg48, and His77. Mg(2+)-binding residues include Asp84 and Asp90. Arg95 serves as a coordination point for (2E)-geranyl diphosphate. Residue Arg96 coordinates isopentenyl diphosphate. Residues Lys181, Thr182, and Gln220 each coordinate (2E)-geranyl diphosphate.

This sequence belongs to the FPP/GGPP synthase family. Mg(2+) serves as cofactor.

The protein resides in the cytoplasm. The enzyme catalyses isopentenyl diphosphate + (2E)-geranyl diphosphate = (2E,6E)-farnesyl diphosphate + diphosphate. The sequence is that of Farnesyl diphosphate synthase (ispA) from Buchnera aphidicola subsp. Schizaphis graminum (strain Sg).